A 433-amino-acid chain; its full sequence is Mannan endo-1,4-beta-mannosidase 2 (433 aa).

A signal peptide spans 1-28; the sequence is MAAPTGNGPVIPILGFLTCVAFIYLSFG. N-linked (GlcNAc...) asparagine glycosylation is present at Asn-46. Trp-98 provides a ligand contact to substrate. A glycan (N-linked (GlcNAc...) asparagine) is linked at Asn-169. Asn-214 provides a ligand contact to substrate. Glu-215 acts as the Proton donor in catalysis. Tyr-295 is a binding site for substrate. Glu-335 serves as the catalytic Nucleophile. Trp-377 is a substrate binding site.

This sequence belongs to the glycosyl hydrolase 5 (cellulase A) family. In terms of tissue distribution, expressed in roots, stems, leaves and seeds.

The protein resides in the secreted. It catalyses the reaction Random hydrolysis of (1-&gt;4)-beta-D-mannosidic linkages in mannans, galactomannans and glucomannans.. In Arabidopsis thaliana (Mouse-ear cress), this protein is Mannan endo-1,4-beta-mannosidase 2 (MAN2).